A 490-amino-acid polypeptide reads, in one-letter code: N-succinylglutamate 5-semialdehyde dehydrogenase (490 aa).

220-225 (GSANTG) lines the NAD(+) pocket. Catalysis depends on residues E243 and C277.

Belongs to the aldehyde dehydrogenase family. AstD subfamily.

It carries out the reaction N-succinyl-L-glutamate 5-semialdehyde + NAD(+) + H2O = N-succinyl-L-glutamate + NADH + 2 H(+). It participates in amino-acid degradation; L-arginine degradation via AST pathway; L-glutamate and succinate from L-arginine: step 4/5. Functionally, catalyzes the NAD-dependent reduction of succinylglutamate semialdehyde into succinylglutamate. This Shigella dysenteriae serotype 1 (strain Sd197) protein is N-succinylglutamate 5-semialdehyde dehydrogenase.